Consider the following 220-residue polypeptide: Splicing factor U2AF 26 kDa subunit (220 aa).

An N-acetylalanine modification is found at alanine 2. The C3H1-type 1 zinc finger occupies 12 to 40; that stretch reads EKDKVNCSFYFKIGACRHGDRCSRLHNKP. One can recognise an RRM domain in the interval 65–147; sequence SHCHVSDVEV…QAVHAELSPV (83 aa). A C3H1-type 2 zinc finger spans residues 149–176; that stretch reads DFRESCCRQYEMGECTRGGFCNFMHLRP. A disordered region spans residues 186-220; the sequence is YGRGPRRRSPPRSHTGHRPRERNRRRSPDHRHGRF. Over residues 189–220 the composition is skewed to basic residues; the sequence is GPRRRSPPRSHTGHRPRERNRRRSPDHRHGRF.

It belongs to the splicing factor SR family. In terms of assembly, interacts with GFI1, U2AF2 and C1QBP.

Its subcellular location is the nucleus. It localises to the nucleus speckle. The protein localises to the cytoplasm. RNA-binding protein that function as a pre-mRNA splicing factor. Plays a critical role in both constitutive and enhancer-dependent splicing by mediating protein-protein interactions and protein-RNA interactions required for accurate 3'-splice site selection. Acts by enhancing the binding of U2AF2 to weak pyrimidine tracts. Also participates in the regulation of alternative pre-mRNA splicing. Activates exon 5 skipping of PTPRC during T-cell activation; an event reversed by GFI1. Binds to RNA at the AG dinucleotide at the 3'-splice site. Shows a preference for AGC or AGA. The protein is Splicing factor U2AF 26 kDa subunit (U2AF1L4) of Bos taurus (Bovine).